Here is a 498-residue protein sequence, read N- to C-terminus: Histidine--tRNA ligase (498 aa).

This sequence belongs to the class-II aminoacyl-tRNA synthetase family. Homodimer.

It localises to the cytoplasm. The enzyme catalyses tRNA(His) + L-histidine + ATP = L-histidyl-tRNA(His) + AMP + diphosphate + H(+). The polypeptide is Histidine--tRNA ligase (Mycoplasmopsis synoviae (strain 53) (Mycoplasma synoviae)).